Here is a 119-residue protein sequence, read N- to C-terminus: Ghilanten (119 aa).

Position 1 is a pyrrolidone carboxylic acid (glutamine 1). 10 disulfides stabilise this stretch: cysteine 8–cysteine 19, cysteine 13–cysteine 26, cysteine 28–cysteine 48, cysteine 33–cysteine 51, cysteine 37–cysteine 53, cysteine 62–cysteine 73, cysteine 67–cysteine 80, cysteine 82–cysteine 103, cysteine 88–cysteine 106, and cysteine 92–cysteine 108. Residues 28 to 53 enclose the Antistasin-like 1 domain; the sequence is CPEVRCRVYCSHGFQRSRYGCEVCRC. Residues 83 to 108 form the Antistasin-like 2 domain; it reads KIDINCRKTCPNGLKRDKLGCEYCEC. Residues 97–100 and 111–118 each bind heparin; these read KRDK and KRKLVPRL.

Belongs to the protease inhibitor I15 (antistasin) family.

It localises to the secreted. In terms of biological role, this highly disulfide-bonded protein is a potent inhibitor of factor Xa. May have therapeutic utility as an anticoagulant. Also exhibits a strong metastatic activity. The polypeptide is Ghilanten (Haementeria ghilianii (Amazon leech)).